Reading from the N-terminus, the 150-residue chain is UPF0178 protein AZOSEA36080 (150 aa).

It belongs to the UPF0178 family.

The protein is UPF0178 protein AZOSEA36080 of Aromatoleum aromaticum (strain DSM 19018 / LMG 30748 / EbN1) (Azoarcus sp. (strain EbN1)).